Here is a 75-residue protein sequence, read N- to C-terminus: Guanine nucleotide-binding protein G(I)/G(S)/G(O) subunit gamma-3 (75 aa).

Residue Thr5 is modified to Phosphothreonine. Residue Ser9 is modified to Phosphoserine. Residue Thr10 is modified to Phosphothreonine. Ser12 bears the Phosphoserine mark. Cys72 carries the post-translational modification Cysteine methyl ester. Cys72 is lipidated: S-geranylgeranyl cysteine. A propeptide spans 73–75 (ALL) (removed in mature form).

It belongs to the G protein gamma family. In terms of assembly, g proteins are composed of 3 units, alpha, beta and gamma. Forms a complex with GNAO1 and GNB1. Interacts with SCN8A. Abundantly expressed in brain. Low levels in testis.

Its subcellular location is the cell membrane. Its function is as follows. Guanine nucleotide-binding proteins (G proteins) are involved as a modulator or transducer in various transmembrane signaling systems. The beta and gamma chains are required for the GTPase activity, for replacement of GDP by GTP, and for G protein-effector interaction. The sequence is that of Guanine nucleotide-binding protein G(I)/G(S)/G(O) subunit gamma-3 (GNG3) from Bos taurus (Bovine).